Reading from the N-terminus, the 183-residue chain is MSSPSPGKRRMDTDVVKLIESKHEVTILGGLNEFVVKFYGPQGTPYEGGVWKVRVDLPDKYPFKSPSIGFMNKIFHPNIDEASGTVCLDVINQTWTALYDLTNIFESFLPQLLAYPNPIDPLNGDAAAMYLHRPEEYKQKIKEYIQKYATEEALKEQEEGTGDSSSESSMSDFSEDEAQDMEL.

Residues 1 to 150 (MSSPSPGKRR…IKEYIQKYAT (150 aa)) form the UBC core domain. Lysine 60 bears the N6-acetyllysine mark. Cysteine 87 acts as the Glycyl thioester intermediate in catalysis. The disordered stretch occupies residues 152 to 183 (EALKEQEEGTGDSSSESSMSDFSEDEAQDMEL). Residues 163–172 (DSSSESSMSD) show a composition bias toward low complexity. Over residues 173–183 (FSEDEAQDMEL) the composition is skewed to acidic residues.

The protein belongs to the ubiquitin-conjugating enzyme family. Interacts with MAEA and WDR26, components of the CTLH complex that contains GID4, RANBP9 and/or RANBP10, MKLN1, MAEA, RMND5A (or alternatively its paralog RMND5B), GID8, ARMC8, WDR26 and YPEL5. In terms of processing, autoubiquitinated in vitro in the presence of NEDD4L.

The enzyme catalyses S-ubiquitinyl-[E1 ubiquitin-activating enzyme]-L-cysteine + [E2 ubiquitin-conjugating enzyme]-L-cysteine = [E1 ubiquitin-activating enzyme]-L-cysteine + S-ubiquitinyl-[E2 ubiquitin-conjugating enzyme]-L-cysteine.. It carries out the reaction S-ubiquitinyl-[E1 ubiquitin-activating enzyme]-L-cysteine + [acceptor protein]-L-lysine = [E1 ubiquitin-activating enzyme]-L-cysteine + N(6)-monoubiquitinyl-[acceptor protein]-L-lysine.. Its pathway is protein modification; protein ubiquitination. In terms of biological role, accepts ubiquitin from the E1 complex and catalyzes its covalent attachment to other proteins. E2 ubiquitin conjugating enzyme that transfers ubiquitin to MAEA, a core component of the CTLH E3 ubiquitin-protein ligase complex. In vitro catalyzes 'Lys-11'- and 'Lys-48'-linked polyubiquitination. Capable, in vitro, to ubiquitinate histone H2A. In Homo sapiens (Human), this protein is Ubiquitin-conjugating enzyme E2 H (UBE2H).